The chain runs to 553 residues: Urocanate hydratase (553 aa).

Residues 45-46 (GG), Gln-123, 169-171 (GMG), Asp-189, Arg-194, 235-236 (NA), 256-260 (QTSAH), 266-267 (YV), Tyr-315, and Gly-485 contribute to the NAD(+) site.

The protein belongs to the urocanase family. NAD(+) serves as cofactor.

The protein resides in the cytoplasm. It carries out the reaction 4-imidazolone-5-propanoate = trans-urocanate + H2O. Its pathway is amino-acid degradation; L-histidine degradation into L-glutamate; N-formimidoyl-L-glutamate from L-histidine: step 2/3. Its function is as follows. Catalyzes the conversion of urocanate to 4-imidazolone-5-propionate. The chain is Urocanate hydratase from Staphylococcus aureus (strain MRSA252).